A 466-amino-acid chain; its full sequence is Ribulose bisphosphate carboxylase large chain (466 aa).

Lys-5 carries the N6,N6,N6-trimethyllysine modification. Positions 114 and 164 each coordinate substrate. Lys-166 functions as the Proton acceptor in the catalytic mechanism. Residue Lys-168 coordinates substrate. Mg(2+) contacts are provided by Lys-192, Asp-194, and Glu-195. Lys-192 bears the N6-carboxylysine mark. His-285 acts as the Proton acceptor in catalysis. Substrate contacts are provided by Arg-286, His-318, and Ser-370.

It belongs to the RuBisCO large chain family. Type I subfamily. Heterohexadecamer of 8 large chains and 8 small chains; disulfide-linked. The disulfide link is formed within the large subunit homodimers. The cofactor is Mg(2+). The disulfide bond which can form in the large chain dimeric partners within the hexadecamer appears to be associated with oxidative stress and protein turnover.

The protein resides in the plastid. Its subcellular location is the chloroplast. The enzyme catalyses 2 (2R)-3-phosphoglycerate + 2 H(+) = D-ribulose 1,5-bisphosphate + CO2 + H2O. It catalyses the reaction D-ribulose 1,5-bisphosphate + O2 = 2-phosphoglycolate + (2R)-3-phosphoglycerate + 2 H(+). Functionally, ruBisCO catalyzes two reactions: the carboxylation of D-ribulose 1,5-bisphosphate, the primary event in carbon dioxide fixation, as well as the oxidative fragmentation of the pentose substrate in the photorespiration process. Both reactions occur simultaneously and in competition at the same active site. The polypeptide is Ribulose bisphosphate carboxylase large chain (Betula nigra (River birch)).